Here is a 554-residue protein sequence, read N- to C-terminus: Zinc finger protein 426 (554 aa).

Residues 42 to 112 (VTFDDVAVDF…QGGVLQGWEM (71 aa)) enclose the KRAB domain. The C2H2-type 1; atypical zinc-finger motif lies at 146 to 174 (CDCEQCGEVFSEHSCLKTHVRTQSTGNTH). C2H2-type zinc fingers lie at residues 224–246 (FECS…MRTH), 280–302 (YKCK…MRTH), 308–330 (YECK…GRTH), 336–358 (YVCK…VRSH), 364–386 (YECK…IRTH), 392–414 (FVCV…LRTH), 420–442 (CECK…MRTH), 448–470 (YTCK…MRIH), 476–498 (YECK…ERTH), 504–526 (YECK…EKTH), and 532–554 (YKCQ…EQIH).

It is found in the nucleus. In terms of biological role, may be involved in transcriptional regulation. This is Zinc finger protein 426 (ZNF426) from Homo sapiens (Human).